The sequence spans 321 residues: F420-non-reducing hydrogenase iron-sulfur subunit G (321 aa).

This sequence belongs to the [NiFe]/[NiFeSe] hydrogenase small subunit family. The F420-non-reducing hydrogenase is composed of three subunits; MvhA, MvhD and MvhG. It forms a complex with the heterodisulfide reductase (Hdr).

The protein resides in the cytoplasm. In terms of biological role, part of a complex that provides reducing equivalents for heterodisulfide reductase. The chain is F420-non-reducing hydrogenase iron-sulfur subunit G (mvhG) from Archaeoglobus profundus (strain DSM 5631 / JCM 9629 / NBRC 100127 / Av18).